Consider the following 834-residue polypeptide: Translation factor GUF1 homolog, mitochondrial (834 aa).

Residues 1 to 66 constitute a mitochondrion transit peptide; that stretch reads MKLCGVRSSG…RPLLAEPRRY (66 aa). Positions 129-314 constitute a tr-type G domain; it reads ACIRNVSVVA…HIIDKVPPPC (186 aa). Residues 138 to 145, 205 to 209, and 259 to 262 each bind GTP; these read AHVDHGKT, DTPGH, and TKMD. 2 disordered regions span residues 363 to 385 and 476 to 507; these read GAAS…ASGG and TGSP…SSSV. Residues 488–507 are compositionally biased toward low complexity; that stretch reads ATAAETASSDDASGSGSSSV.

This sequence belongs to the TRAFAC class translation factor GTPase superfamily. Classic translation factor GTPase family. LepA subfamily.

It is found in the mitochondrion inner membrane. The enzyme catalyses GTP + H2O = GDP + phosphate + H(+). In terms of biological role, promotes mitochondrial protein synthesis. May act as a fidelity factor of the translation reaction, by catalyzing a one-codon backward translocation of tRNAs on improperly translocated ribosomes. Binds to mitochondrial ribosomes in a GTP-dependent manner. The protein is Translation factor GUF1 homolog, mitochondrial of Leishmania infantum.